The following is a 396-amino-acid chain: Acetate kinase (396 aa).

A Mg(2+)-binding site is contributed by Asn7. Lys14 is a binding site for ATP. Arg91 is a substrate binding site. Residue Asp148 is the Proton donor/acceptor of the active site. ATP-binding positions include 208–212, 283–285, and 331–335; these read HLGNG, DFR, and GLGEN. Mg(2+) is bound at residue Glu384.

This sequence belongs to the acetokinase family. Homodimer. It depends on Mg(2+) as a cofactor. The cofactor is Mn(2+).

It localises to the cytoplasm. It catalyses the reaction acetate + ATP = acetyl phosphate + ADP. Its pathway is metabolic intermediate biosynthesis; acetyl-CoA biosynthesis; acetyl-CoA from acetate: step 1/2. In terms of biological role, catalyzes the formation of acetyl phosphate from acetate and ATP. Can also catalyze the reverse reaction. The chain is Acetate kinase from Alkaliphilus metalliredigens (strain QYMF).